The sequence spans 405 residues: Serpin B12 (405 aa).

Residues 64–83 (SQNESKEPDPCLKSNKQKAG) are disordered.

Belongs to the serpin family. Ov-serpin subfamily. As to quaternary structure, interacts with SLFN12; as part of a pathway regulating cell differentiation. May interact with USP14. Expressed in many tissues, including brain, bone marrow, lymph node, heart, lung, liver, pancreas, testis, ovary, and intestine.

It is found in the cytoplasm. Inhibits trypsin and plasmin, but not thrombin, coagulation factor Xa, or urokinase-type plasminogen activator. May play a role in cell differentiation. The chain is Serpin B12 (SERPINB12) from Homo sapiens (Human).